Consider the following 358-residue polypeptide: MKPATAKISSLALKHNLELIHQKAPDSKMIAIVKANAYGHGVEFVASTVEEQVDGFGVARIEEALTLRSKGIIKPILLLEGFFSAKDLPVIAVNNIQTVVHNREQLEALKQTKLPNPIKVWLKIDTGMHRLGVALDEVEDYVEELKKCANVEPLIGYVSHFSRADELDSDYTRIQLNRFLQATEDKGGPRCIAASGGILFWPDSHLEWIRPGIIMYGVSPTDTPSSEFGLIPVMTLTSSLIAVRRHKAGEPVGYGGTWISKKDTKIGVIAIGYGDGYPRNIPSGTPVYINGRIVPIVGRVSMDMITVDLGEDCTDKVGDEVILWGKELPIETVAKHMGILSYELMTKLTPRVLTEYAD.

The Proton acceptor; specific for D-alanine role is filled by K34. K34 carries the post-translational modification N6-(pyridoxal phosphate)lysine. R130 provides a ligand contact to substrate. Catalysis depends on Y254, which acts as the Proton acceptor; specific for L-alanine. M302 is a binding site for substrate.

This sequence belongs to the alanine racemase family. It depends on pyridoxal 5'-phosphate as a cofactor.

It carries out the reaction L-alanine = D-alanine. It functions in the pathway amino-acid biosynthesis; D-alanine biosynthesis; D-alanine from L-alanine: step 1/1. Catalyzes the interconversion of L-alanine and D-alanine. May also act on other amino acids. This Actinobacillus succinogenes (strain ATCC 55618 / DSM 22257 / CCUG 43843 / 130Z) protein is Alanine racemase (alr).